The primary structure comprises 121 residues: Small ribosomal subunit protein uS13 (121 aa).

Residues 89 to 121 are disordered; sequence MRHRRGLPVRGQHTKNNARTRKGKKVSIAGRKK.

Belongs to the universal ribosomal protein uS13 family. In terms of assembly, part of the 30S ribosomal subunit. Forms a loose heterodimer with protein S19. Forms two bridges to the 50S subunit in the 70S ribosome.

Its function is as follows. Located at the top of the head of the 30S subunit, it contacts several helices of the 16S rRNA. In the 70S ribosome it contacts the 23S rRNA (bridge B1a) and protein L5 of the 50S subunit (bridge B1b), connecting the 2 subunits; these bridges are implicated in subunit movement. Contacts the tRNAs in the A and P-sites. This is Small ribosomal subunit protein uS13 from Pediococcus pentosaceus (strain ATCC 25745 / CCUG 21536 / LMG 10740 / 183-1w).